A 158-amino-acid polypeptide reads, in one-letter code: Cyclic pyranopterin monophosphate synthase (158 aa).

Substrate-binding positions include 73–75 (LCH) and 110–111 (ME). Aspartate 125 is an active-site residue.

The protein belongs to the MoaC family. As to quaternary structure, homohexamer; trimer of dimers.

It catalyses the reaction (8S)-3',8-cyclo-7,8-dihydroguanosine 5'-triphosphate = cyclic pyranopterin phosphate + diphosphate. It participates in cofactor biosynthesis; molybdopterin biosynthesis. Functionally, catalyzes the conversion of (8S)-3',8-cyclo-7,8-dihydroguanosine 5'-triphosphate to cyclic pyranopterin monophosphate (cPMP). In Azotobacter vinelandii (strain DJ / ATCC BAA-1303), this protein is Cyclic pyranopterin monophosphate synthase.